A 353-amino-acid chain; its full sequence is GDP-mannose transporter (353 aa).

Residues 1-31 (MGLLLSYLFGYIFYSVNKKFHIMEKFGASNS) lie on the Cytoplasmic side of the membrane. A helical transmembrane segment spans residues 32–52 (IVNNGPVSIFAYCASSILMTV). Topologically, residues 53-66 (TNKFVVGAYEFNLN) are lumenal. A helical membrane pass occupies residues 67-87 (FFLLAVQAAVCLVTIATLKGL). The Cytoplasmic portion of the chain corresponds to 88–102 (GIITYRQFNKDEAKK). A helical membrane pass occupies residues 103 to 122 (WFPIAFLLVLMIYTSSKALQ). Over 123–125 (YLS) the chain is Lumenal. A helical membrane pass occupies residues 126 to 148 (IPVYTIFKNLTIILIAYGEVIWF). Residues 149–154 (GGKVTT) lie on the Cytoplasmic side of the membrane. A helical membrane pass occupies residues 155–172 (MALGSFILMVLSSVIAYY). The Lumenal segment spans residues 173 to 187 (GDTAETGEKTAEMHL). A helical membrane pass occupies residues 188-208 (LYLGYAWMFTNCFSSAAFVLI). Topologically, residues 209 to 227 (MRKRIKLTNFKDFDTMYYN) are cytoplasmic. Residues 228–248 (NLLSLPLLLVFSFLFEDWSSV) traverse the membrane as a helical segment. Residues 249–262 (NLNKNFPPDNRNTT) are Lumenal-facing. The N-linked (GlcNAc...) asparagine glycan is linked to Asn-260. The helical transmembrane segment at 263 to 283 (IFVMILSGASSVGISYCSAWC) threads the bilayer. Topologically, residues 284–290 (VRVTSST) are cytoplasmic. A helical membrane pass occupies residues 291-313 (TYSMVGALNKLPIALSGLVFFNA). Residues 314-316 (AVN) are Lumenal-facing. Residues 317–336 (FWSVSSIFVGFLAGVFYAVA) form a helical membrane-spanning segment. Residues 337–353 (KQKQQKENAQQLPVANK) are Cytoplasmic-facing.

The protein belongs to the TPT transporter family. SLC35D subfamily. Homooligomer.

Its subcellular location is the golgi apparatus membrane. It is found in the cytoplasmic vesicle membrane. The protein localises to the endoplasmic reticulum membrane. Its function is as follows. Involved in the import of GDP-mannose from the cytoplasm into the Golgi lumen. This Meyerozyma guilliermondii (strain ATCC 6260 / CBS 566 / DSM 6381 / JCM 1539 / NBRC 10279 / NRRL Y-324) (Yeast) protein is GDP-mannose transporter (VRG4).